Consider the following 108-residue polypeptide: Peptidyl-prolyl cis-trans isomerase FKBP1A (108 aa).

A PPIase FKBP-type domain is found at 20–108 (GQTCVVHYTG…VFDVELLKLE (89 aa)). Residue lysine 53 is modified to N6-acetyllysine; alternate. At lysine 53 the chain carries N6-succinyllysine; alternate.

This sequence belongs to the FKBP-type PPIase family. FKBP1 subfamily. As to quaternary structure, interacts with TGFBR1; prevents TGFBR1 phosphorylation by TGFBR2 and stabilizes it in the inactive conformation. Interacts with ACVR1B and SMAD7. Identified in a complex composed of RYR1, PDE4D, PKA, FKBP1A and protein phosphatase 1 (PP1). Interacts directly with RYR2 and RYR3. Interacts directly with RYR1. Interacts with GLMN; rapamycin and FK506 abolish the interaction with GLMN in a dose dependent manner.

Its subcellular location is the cytoplasm. The protein resides in the cytosol. The protein localises to the sarcoplasmic reticulum membrane. It catalyses the reaction [protein]-peptidylproline (omega=180) = [protein]-peptidylproline (omega=0). With respect to regulation, inhibited by both FK506 and rapamycin. In terms of biological role, keeps in an inactive conformation TGFBR1, the TGF-beta type I serine/threonine kinase receptor, preventing TGF-beta receptor activation in absence of ligand. Recruits SMAD7 to ACVR1B which prevents the association of SMAD2 and SMAD3 with the activin receptor complex, thereby blocking the activin signal. May modulate the RYR1 calcium channel activity. PPIases accelerate the folding of proteins. It catalyzes the cis-trans isomerization of proline imidic peptide bonds in oligopeptides. This is Peptidyl-prolyl cis-trans isomerase FKBP1A (Fkbp1a) from Mus musculus (Mouse).